The primary structure comprises 688 residues: Probable glucan endo-1,3-beta-glucosidase btgC (688 aa).

3 disordered regions span residues 1-49 (MSGP…MNGQ), 61-91 (DGRQ…NLGP), and 169-194 (QLTP…DIPY). The Cytoplasmic portion of the chain corresponds to 1-307 (MSGPNRTYSF…PKPGGGNKKR (307 aa)). Positions 175–188 (SVSHLSSTNPSQRN) are enriched in polar residues. The chain crosses the membrane as a helical; Signal-anchor for type II membrane protein span at residues 308-328 (GWIVGAILAFIIIGAIVGGAV). Residues 329–688 (GGTIGHRGNE…IPDCGGKTAT (360 aa)) are Extracellular-facing. The segment at 334–363 (HRGNEEPSSASSASSSSTQTATEDTSVNGD) is disordered. Positions 341–355 (SSASSASSSSTQTAT) are enriched in low complexity. N-linked (GlcNAc...) asparagine glycosylation is found at Asn408, Asn431, and Asn459. Catalysis depends on Glu491, which acts as the Proton donor. The active-site Nucleophile is Glu590. Asn609 and Asn635 each carry an N-linked (GlcNAc...) asparagine glycan.

It belongs to the glycosyl hydrolase 17 family.

Its subcellular location is the cell membrane. It carries out the reaction Hydrolysis of (1-&gt;3)-beta-D-glucosidic linkages in (1-&gt;3)-beta-D-glucans.. Functionally, glucanases play a role in cell expansion during growth, in cell-cell fusion during mating, and in spore release during sporulation. This enzyme may be involved in beta-glucan degradation. Active on laminarin and lichenan. The protein is Probable glucan endo-1,3-beta-glucosidase btgC (btgC) of Aspergillus fumigatus (strain CBS 144.89 / FGSC A1163 / CEA10) (Neosartorya fumigata).